Consider the following 229-residue polypeptide: 1-(5-phosphoribosyl)-5-[(5-phosphoribosylamino)methylideneamino] imidazole-4-carboxamide isomerase (229 aa).

Asp-8 functions as the Proton acceptor in the catalytic mechanism. Asp-125 acts as the Proton donor in catalysis.

Belongs to the HisA/HisF family.

The protein localises to the cytoplasm. The catalysed reaction is 1-(5-phospho-beta-D-ribosyl)-5-[(5-phospho-beta-D-ribosylamino)methylideneamino]imidazole-4-carboxamide = 5-[(5-phospho-1-deoxy-D-ribulos-1-ylimino)methylamino]-1-(5-phospho-beta-D-ribosyl)imidazole-4-carboxamide. It participates in amino-acid biosynthesis; L-histidine biosynthesis; L-histidine from 5-phospho-alpha-D-ribose 1-diphosphate: step 4/9. The sequence is that of 1-(5-phosphoribosyl)-5-[(5-phosphoribosylamino)methylideneamino] imidazole-4-carboxamide isomerase from Thermococcus onnurineus (strain NA1).